Here is a 389-residue protein sequence, read N- to C-terminus: Phosphoribosylformylglycinamidine cyclo-ligase, chloroplastic (389 aa).

The transit peptide at 1-58 (MEARILQSSSSCYSSLYAVNRSRFSSVSSPKPFSVSFAQTTRTRTRVLSMSKKDGRTD) directs the protein to the chloroplast. The disordered stretch occupies residues 46 to 65 (RVLSMSKKDGRTDKDDDTDS).

The protein belongs to the AIR synthase family.

The protein resides in the plastid. It localises to the chloroplast. It catalyses the reaction 2-formamido-N(1)-(5-O-phospho-beta-D-ribosyl)acetamidine + ATP = 5-amino-1-(5-phospho-beta-D-ribosyl)imidazole + ADP + phosphate + H(+). The protein operates within purine metabolism; IMP biosynthesis via de novo pathway; 5-amino-1-(5-phospho-D-ribosyl)imidazole from N(2)-formyl-N(1)-(5-phospho-D-ribosyl)glycinamide: step 2/2. The sequence is that of Phosphoribosylformylglycinamidine cyclo-ligase, chloroplastic (PUR5) from Arabidopsis thaliana (Mouse-ear cress).